Reading from the N-terminus, the 358-residue chain is Peptide chain release factor 1 (358 aa).

Q232 bears the N5-methylglutamine mark.

This sequence belongs to the prokaryotic/mitochondrial release factor family. In terms of processing, methylated by PrmC. Methylation increases the termination efficiency of RF1.

The protein localises to the cytoplasm. Its function is as follows. Peptide chain release factor 1 directs the termination of translation in response to the peptide chain termination codons UAG and UAA. This chain is Peptide chain release factor 1, found in Acidobacterium capsulatum (strain ATCC 51196 / DSM 11244 / BCRC 80197 / JCM 7670 / NBRC 15755 / NCIMB 13165 / 161).